A 522-amino-acid chain; its full sequence is 2-isopropylmalate synthase (522 aa).

The Pyruvate carboxyltransferase domain occupies 5–267; it reads VIIFDTTLRD…YTNINAREIH (263 aa). Mn(2+) contacts are provided by Asp-14, His-202, His-204, and Asn-238. Residues 392 to 522 form a regulatory domain region; the sequence is VMEQLVVQSD…MQQTRELGGV (131 aa).

Belongs to the alpha-IPM synthase/homocitrate synthase family. LeuA type 1 subfamily. In terms of assembly, homodimer. Mn(2+) is required as a cofactor.

The protein localises to the cytoplasm. The enzyme catalyses 3-methyl-2-oxobutanoate + acetyl-CoA + H2O = (2S)-2-isopropylmalate + CoA + H(+). It participates in amino-acid biosynthesis; L-leucine biosynthesis; L-leucine from 3-methyl-2-oxobutanoate: step 1/4. Catalyzes the condensation of the acetyl group of acetyl-CoA with 3-methyl-2-oxobutanoate (2-ketoisovalerate) to form 3-carboxy-3-hydroxy-4-methylpentanoate (2-isopropylmalate). In Shewanella amazonensis (strain ATCC BAA-1098 / SB2B), this protein is 2-isopropylmalate synthase.